Here is a 273-residue protein sequence, read N- to C-terminus: Large ribosomal subunit protein uL2 (273 aa).

The disordered stretch occupies residues 196–273 (GNSDHGLESS…SSKYIIERRK (78 aa)). Composition is skewed to basic residues over residues 209-220 (GRTRWMGRRPRN) and 255-264 (LKTRAPKKQS).

It belongs to the universal ribosomal protein uL2 family. In terms of assembly, part of the 50S ribosomal subunit. Forms a bridge to the 30S subunit in the 70S ribosome.

Functionally, one of the primary rRNA binding proteins. Required for association of the 30S and 50S subunits to form the 70S ribosome, for tRNA binding and peptide bond formation. It has been suggested to have peptidyltransferase activity; this is somewhat controversial. Makes several contacts with the 16S rRNA in the 70S ribosome. This Phocaeicola vulgatus (strain ATCC 8482 / DSM 1447 / JCM 5826 / CCUG 4940 / NBRC 14291 / NCTC 11154) (Bacteroides vulgatus) protein is Large ribosomal subunit protein uL2.